The following is a 509-amino-acid chain: Dihydrolipoyl dehydrogenase, mitochondrial (509 aa).

The transit peptide at 1–35 (MQSWSRVYCSLAKRGHFSRISHGLQAVSAVPLRTY) directs the protein to the mitochondrion. An N6-acetyllysine; alternate modification is found at Lys66. Lys66 is modified (N6-succinyllysine; alternate). FAD is bound by residues 71-80 (EKNETLGGTC) and Lys89. A disulfide bond links Cys80 and Cys85. 4 positions are modified to N6-acetyllysine; alternate: Lys104, Lys122, Lys132, and Lys143. Lys104, Lys122, Lys132, and Lys143 each carry N6-succinyllysine; alternate. Gly154 provides a ligand contact to FAD. N6-succinyllysine occurs at positions 159 and 166. 183–185 (TGS) is an FAD binding site. NAD(+)-binding positions include 220 to 227 (GAGVIGVE) and Glu243. N6-succinyllysine occurs at positions 273 and 277. Val278 lines the NAD(+) pocket. A phosphoserine mark is found at Ser285 and Ser297. Gly314 provides a ligand contact to NAD(+). N6-acetyllysine is present on Lys346. FAD is bound by residues Asp355 and 361–364 (MLAH). Lys410 is modified (N6-acetyllysine; alternate). The residue at position 410 (Lys410) is an N6-succinyllysine; alternate. N6-acetyllysine is present on residues Lys417 and Lys420. N6-succinyllysine is present on Lys430. The Proton acceptor role is filled by His487. A Phosphoserine modification is found at Ser502. Lys505 carries the post-translational modification N6-acetyllysine; alternate. N6-succinyllysine; alternate is present on Lys505.

This sequence belongs to the class-I pyridine nucleotide-disulfide oxidoreductase family. As to quaternary structure, homodimer. Part of the multimeric pyruvate dehydrogenase complex that contains multiple copies of pyruvate dehydrogenase (subunits PDHA (PDHA1 or PDHA2) and PDHB, E1), dihydrolipoamide acetyltransferase (DLAT, E2) and lipoamide dehydrogenase (DLD, E3). These subunits are bound to an inner core composed of about 48 DLAT and 12 PDHX molecules (by non covalent bonds). The 2-oxoglutarate dehydrogenase complex is composed of OGDH (2-oxoglutarate dehydrogenase; E1), DLST (dihydrolipoamide succinyltransferase; E2), DLD (dihydrolipoamide dehydrogenase; E3) and the assembly factor KGD4. It contains multiple copies of the three enzymatic components (E1, E2 and E3). In the nucleus, the 2-oxoglutarate dehydrogenase complex associates with KAT2A. Interacts with PDHX. Requires FAD as cofactor. In terms of processing, tyrosine phosphorylated.

It is found in the mitochondrion matrix. The protein localises to the nucleus. Its subcellular location is the cell projection. The protein resides in the cilium. It localises to the flagellum. It is found in the cytoplasmic vesicle. The protein localises to the secretory vesicle. Its subcellular location is the acrosome. It carries out the reaction N(6)-[(R)-dihydrolipoyl]-L-lysyl-[protein] + NAD(+) = N(6)-[(R)-lipoyl]-L-lysyl-[protein] + NADH + H(+). Lipoamide dehydrogenase is a component of the glycine cleavage system as well as an E3 component of three alpha-ketoacid dehydrogenase complexes (pyruvate-, alpha-ketoglutarate-, and branched-chain amino acid-dehydrogenase complex). The 2-oxoglutarate dehydrogenase complex is mainly active in the mitochondrion. A fraction of the 2-oxoglutarate dehydrogenase complex also localizes in the nucleus and is required for lysine succinylation of histones: associates with KAT2A on chromatin and provides succinyl-CoA to histone succinyltransferase KAT2A. In monomeric form may have additional moonlighting function as serine protease. Involved in the hyperactivation of spermatazoa during capacitation and in the spermatazoal acrosome reaction. The sequence is that of Dihydrolipoyl dehydrogenase, mitochondrial (DLD) from Canis lupus familiaris (Dog).